A 72-amino-acid polypeptide reads, in one-letter code: Phaiodotoxin-2 (72 aa).

Positions 1 to 72 constitute an LCN-type CS-alpha/beta domain; the sequence is KFIRHKDESF…CFGALESKCA (72 aa). Intrachain disulfides connect Cys-13–Cys-38, Cys-23–Cys-50, Cys-27–Cys-52, and Cys-63–Cys-71.

The protein belongs to the long (4 C-C) scorpion toxin superfamily. Sodium channel inhibitor family. As to expression, expressed by the venom gland.

The protein resides in the secreted. In terms of biological role, sodium channel (Nav) specific neurotoxin. In Anuroctonus phaiodactylus (Mafia scorpion), this protein is Phaiodotoxin-2.